Reading from the N-terminus, the 133-residue chain is Sporulation-specific protein 2 (133 aa).

The protein belongs to the VPS13 family. Interacts with spo13 and spo15.

Its subcellular location is the cytoplasm. It is found in the cytoskeleton. The protein localises to the microtubule organizing center. The protein resides in the spindle pole body. Its function is as follows. Involved in sporulation. Plays a significant role in modification of the spindle pole body prior to spore formation and is required for initiating forespore membrane formation. Assists in the localization of spo13 to the outer surface of the SPB. This is Sporulation-specific protein 2 (spo2) from Schizosaccharomyces pombe (strain 972 / ATCC 24843) (Fission yeast).